A 237-amino-acid chain; its full sequence is Class B acid phosphatase (237 aa).

The first 23 residues, 1–23, serve as a signal peptide directing secretion; that stretch reads MRKVTLTLSAIALALSLNGAAMA. Residue Asp-69 is the Nucleophile of the active site. Residues Asp-69 and Asp-71 each coordinate Mg(2+). Asp-71 acts as the Proton donor in catalysis. Residues 137-138 and Lys-177 each bind substrate; that span reads TG. Asp-192 provides a ligand contact to Mg(2+).

This sequence belongs to the class B bacterial acid phosphatase family. Homotetramer. Mg(2+) serves as cofactor.

The protein resides in the periplasm. The catalysed reaction is a phosphate monoester + H2O = an alcohol + phosphate. Its function is as follows. Dephosphorylates several organic phosphate monoesters. Also has a phosphotransferase activity catalyzing the transfer of low-energy phosphate groups from organic phosphate monoesters to free hydroxyl groups of various organic compounds. This is Class B acid phosphatase from Proteus mirabilis (strain HI4320).